The following is an 878-amino-acid chain: Alanine--tRNA ligase (878 aa).

Residues His-568, His-572, Cys-669, and His-673 each contribute to the Zn(2+) site.

The protein belongs to the class-II aminoacyl-tRNA synthetase family. Zn(2+) serves as cofactor.

The protein resides in the cytoplasm. It carries out the reaction tRNA(Ala) + L-alanine + ATP = L-alanyl-tRNA(Ala) + AMP + diphosphate. Functionally, catalyzes the attachment of alanine to tRNA(Ala) in a two-step reaction: alanine is first activated by ATP to form Ala-AMP and then transferred to the acceptor end of tRNA(Ala). Also edits incorrectly charged Ser-tRNA(Ala) and Gly-tRNA(Ala) via its editing domain. The polypeptide is Alanine--tRNA ligase (Polaromonas sp. (strain JS666 / ATCC BAA-500)).